The sequence spans 440 residues: L-gulonolactone oxidase (440 aa).

The FAD-binding PCMH-type domain occupies 17–187 (YGCSPEMYYQ…LTVTLQCVPQ (171 aa)). Histidine 54 carries the post-translational modification Pros-8alpha-FAD histidine. A helical membrane pass occupies residues 251–273 (IGFYLLEFLLWTSTYLPRLVGWI).

Belongs to the oxygen-dependent FAD-linked oxidoreductase family. The cofactor is FAD. Highly expressed in liver.

It localises to the microsome membrane. It is found in the endoplasmic reticulum membrane. It carries out the reaction L-gulono-1,4-lactone + O2 = L-ascorbate + H2O2 + H(+). Its pathway is cofactor biosynthesis; L-ascorbate biosynthesis via UDP-alpha-D-glucuronate pathway; L-ascorbate from UDP-alpha-D-glucuronate: step 4/4. In terms of biological role, oxidizes L-gulono-1,4-lactone to hydrogen peroxide and L-xylo-hexulonolactone which spontaneously isomerizes to L-ascorbate. The polypeptide is L-gulonolactone oxidase (Gulo) (Mus musculus (Mouse)).